A 469-amino-acid polypeptide reads, in one-letter code: Cysteine--tRNA ligase (469 aa).

Cys28 contributes to the Zn(2+) binding site. The short motif at 30 to 40 (CTVYDLCHIGH) is the 'HIGH' region element. Residues Cys216, His241, and Glu245 each contribute to the Zn(2+) site. Positions 273–277 (KMSKS) match the 'KMSKS' region motif. ATP is bound at residue Lys276.

This sequence belongs to the class-I aminoacyl-tRNA synthetase family. Monomer. Zn(2+) serves as cofactor.

The protein localises to the cytoplasm. It carries out the reaction tRNA(Cys) + L-cysteine + ATP = L-cysteinyl-tRNA(Cys) + AMP + diphosphate. In Colwellia psychrerythraea (strain 34H / ATCC BAA-681) (Vibrio psychroerythus), this protein is Cysteine--tRNA ligase.